We begin with the raw amino-acid sequence, 114 residues long: NLP effector protein 1 (114 aa).

It belongs to the Necrosis inducing protein (NPP1) family.

It localises to the secreted. Its subcellular location is the host cytoplasm. Probable secreted effector that may act as a pathogen-associated molecular pattern (PAMP) recognized by the plant immune system. Seems not to induce necrosis, neither in several susceptible or resistant Vitis species nor in the dicot model plant Nicotiana benthamiana. This Plasmopara viticola (Downy mildew of grapevine) protein is NLP effector protein 1.